The following is a 993-amino-acid chain: Synaptonemal complex protein 1 (993 aa).

A Mediates head to head self-assembly of N-terminal ends motif is present at residues 98 to 108 (PMSRLYSKLYK). Positions 114–117 (KKWK) match the Nuclear localization signal motif. Coiled coils occupy residues 117 to 172 (KVSI…LIKE) and 215 to 688 (IEKM…EIEN). The tract at residues 203–359 (ETRQVYVDLN…SQLTEVKEAQ (157 aa)) is interaction with SYCE3. Residues 694 to 788 (GKLLGEVEKA…VSLKKQLEIE (95 aa)) form a required for pH-induced assembly of C-terminal ends into antiparallel tetramers region. The Nuclear localization signal signature appears at 697–700 (LGEV). The stretch at 764 to 808 (KIALETELSNIRNELVSLKKQLEIEKEEKEKLKMAKENTAILKDK) forms a coiled coil. Residues 801–993 (NTAILKDKKD…RLKEAEKLFS (193 aa)) form a DNA-binding region. Serine 820 is modified (phosphoserine). The disordered stretch occupies residues 824 to 861 (TSWKFDSKTTPSQNISRLSSSMDSGKSKDNRDNLRASA). Polar residues predominate over residues 831–847 (KTTPSQNISRLSSSMDS). The segment covering 848-857 (GKSKDNRDNL) has biased composition (basic and acidic residues). The Nuclear localization signal motif lies at 898-901 (KKRK).

In terms of assembly, structural component of synaptonemal complexes. Homotetramer that consists of an N-terminal four-helical bundle that bifurcates into two elongated C-terminal dimeric coiled coils. This tetrameric building block potentially self-assembles into a supramolecular zipper-like lattice to mediate meiotic chromosome synapsis. Self-assembly is likely initiated by local proton density at chromosome axis, which is predicted to trigger antiparallel back to back assembly of adjacent C-terminal ends into tetrameric structures that anchor to chromosomal DNA. Then the N-terminal ends are predicted to undergo cooperative antiparallel head to head assembly at the midline of synaptonemal complexes central element to form a zipper-like lattice between properly aligned homologous chromosomes. The nascent synapsis generated by SYCP1 is stabilized through interaction with central element proteins SYCE1 and SYCE2. Interacts (via tetrameric core) with SYCE3; the interaction remodels SYCP1 homotetramers to 2:1 heterotrimers with SYCE3. SYCP1/SYCE3 heterotrimers form lattice assemblies as part of the mature synaptonemal complex via both lateral and head-to-head interactions. Forms a complex with EWSR1, PRDM9, SYCP3 and REC8; complex formation is dependent of phosphorylated form of REC8 and requires PRDM9 bound to hotspot DNA; EWSR1 joins PRDM9 with the chromosomal axis through REC8. Interacts with SPO16. In terms of tissue distribution, detected in testis. Detected in spermatocytes (at protein level).

Its subcellular location is the nucleus. It is found in the chromosome. The protein localises to the centromere. Its function is as follows. Major component of the transverse filaments of synaptonemal complexes, formed between homologous chromosomes during meiotic prophase. Required for normal assembly of the central element of the synaptonemal complexes. Required for normal centromere pairing during meiosis. Required for normal meiotic chromosome synapsis during oocyte and spermatocyte development and for normal male and female fertility. This chain is Synaptonemal complex protein 1, found in Mus musculus (Mouse).